The primary structure comprises 146 residues: 3-hydroxyacyl-[acyl-carrier-protein] dehydratase FabZ (146 aa).

Residue H49 is part of the active site.

The protein belongs to the thioester dehydratase family. FabZ subfamily.

It localises to the cytoplasm. It catalyses the reaction a (3R)-hydroxyacyl-[ACP] = a (2E)-enoyl-[ACP] + H2O. Functionally, involved in unsaturated fatty acids biosynthesis. Catalyzes the dehydration of short chain beta-hydroxyacyl-ACPs and long chain saturated and unsaturated beta-hydroxyacyl-ACPs. The chain is 3-hydroxyacyl-[acyl-carrier-protein] dehydratase FabZ from Pseudomonas aeruginosa (strain LESB58).